A 361-amino-acid chain; its full sequence is Phospho-N-acetylmuramoyl-pentapeptide-transferase (361 aa).

A run of 10 helical transmembrane segments spans residues 21-41 (YITF…FVIG), 72-92 (TPTM…LLWV), 94-114 (LANV…LIGF), 135-155 (LAWT…VTPH), 169-189 (LLVN…VGAS), 200-220 (GLAI…AYLS), 240-260 (LAVF…FNAP), 263-283 (MVFM…AVSV), 289-309 (LVLA…MVQV), and 338-358 (TVVI…LSTL).

Belongs to the glycosyltransferase 4 family. MraY subfamily. It depends on Mg(2+) as a cofactor.

It is found in the cell inner membrane. The catalysed reaction is UDP-N-acetyl-alpha-D-muramoyl-L-alanyl-gamma-D-glutamyl-meso-2,6-diaminopimeloyl-D-alanyl-D-alanine + di-trans,octa-cis-undecaprenyl phosphate = di-trans,octa-cis-undecaprenyl diphospho-N-acetyl-alpha-D-muramoyl-L-alanyl-D-glutamyl-meso-2,6-diaminopimeloyl-D-alanyl-D-alanine + UMP. It participates in cell wall biogenesis; peptidoglycan biosynthesis. Catalyzes the initial step of the lipid cycle reactions in the biosynthesis of the cell wall peptidoglycan: transfers peptidoglycan precursor phospho-MurNAc-pentapeptide from UDP-MurNAc-pentapeptide onto the lipid carrier undecaprenyl phosphate, yielding undecaprenyl-pyrophosphoryl-MurNAc-pentapeptide, known as lipid I. The polypeptide is Phospho-N-acetylmuramoyl-pentapeptide-transferase (Rhodospirillum centenum (strain ATCC 51521 / SW)).